The chain runs to 160 residues: Putative UPF0479 protein YLR466C-A (160 aa).

Transmembrane regions (helical) follow at residues 39–59 and 136–156; these read IVFC…KVLQ and VPMI…ISQH.

The protein belongs to the UPF0479 family.

The protein resides in the membrane. The polypeptide is Putative UPF0479 protein YLR466C-A (Saccharomyces cerevisiae (strain ATCC 204508 / S288c) (Baker's yeast)).